Consider the following 579-residue polypeptide: Folliculin (579 aa).

The interval 30 to 81 (PQGDGNEDSPGQGEQAEEEEGGIQMNSRMRAHSPAEGASVESSSPGPKKSDM) is disordered. Phosphoserine occurs at positions 62 and 73. The uDENN FLCN/SMCR8-type domain maps to 86–242 (RSLAAGHPGY…RNGNAARSLT (157 aa)). Residues 210–220 (AEQFGCPQRAQ) form an essential for interaction with LDHA region. Positions 287-310 (EKLADLEEESESWDNSEAEEEEKA) form a coiled coil. Residues 294-308 (EESESWDNSEAEEEE) are compositionally biased toward acidic residues. A disordered region spans residues 294-337 (EESESWDNSEAEEEEKAPVLPESTEGRELTQGPAESSSLSGCGS). Ser302 is subject to Phosphoserine. A compositionally biased stretch (polar residues) spans 326 to 336 (PAESSSLSGCG). One can recognise a cDENN FLCN/SMCR8-type domain in the interval 339-491 (QPRKLPVFKS…ILNKIEAALT (153 aa)). Ser406, Ser537, and Ser542 each carry phosphoserine; by ULK1. In terms of domain architecture, dDENN FLCN/SMCR8-type spans 493–558 (QNLSVDVVDQ…LLKFWMTGLS (66 aa)). At Ser571 the chain carries Phosphoserine.

Belongs to the folliculin family. In terms of assembly, interacts (via C-terminus) with FNIP1 or FNIP2 (via C-terminus). Component of the lysosomal folliculin complex (LFC), composed of FLCN, FNIP1 (or FNIP2), RagA/RRAGA or RagB/RRAGB GDP-bound, RagC/RRAGC or RagD/RRAGD GTP-bound, and Ragulator. Interaction with FNIP1 or FNIP2 mediates indirect interaction with the PRKAA1, PRKAB1 and PRKAG1 subunits of 5'-AMP-activated protein kinase (AMPK). Interacts with HSP90AA1 in the presence of FNIP1. Interacts with HSP70, STUB1, CDC37, AHSA1, CCT2, STIP1, PTGES3 and PPP5C. Interacts with GABARAP; interaction takes place in the presence of FNIP1 and/or FNIP2. Interacts with RILP; the interaction is direct and promotes association between RILP and RAB34. Interacts with KIF3A and KIF3B. Interacts with lactate dehydrogenase LDHA, but not LDHB; the interaction is direct, may preferentially bind LDHA dimers rather than tetramers, and regulates LDHA activity, acting as an uncompetitive inhibitor. Post-translationally, phosphorylation by ULK1 modulates the interaction with GABARAP and is required to regulate autophagy. As to expression, expressed in most tissues tested, including skin, lung, kidney, heart, testis and stomach.

The protein localises to the lysosome membrane. It localises to the cytoplasm. Its subcellular location is the cytosol. It is found in the cell projection. The protein resides in the cilium. The protein localises to the cytoskeleton. It localises to the microtubule organizing center. Its subcellular location is the centrosome. It is found in the spindle. The protein resides in the nucleus. Its activity is regulated as follows. GTPase-activating activity is inhibited in the folliculin complex (LFC), which stabilizes the GDP-bound state of RagA/RRAGA (or RagB/RRAGB), because Arg-164 is located far from the RagC/RRAGC or RagD/RRAGD nucleotide pocket. Disassembly of the LFC complex upon amino acid restimulation liberates the GTPase-activating activity. Multi-functional protein, involved in both the cellular response to amino acid availability and in the regulation of glycolysis. GTPase-activating protein that plays a key role in the cellular response to amino acid availability through regulation of the non-canonical mTORC1 signaling cascade controlling the MiT/TFE factors TFEB and TFE3. Activates mTORC1 by acting as a GTPase-activating protein: specifically stimulates GTP hydrolysis by RagC/RRAGC or RagD/RRAGD, promoting the conversion to the GDP-bound state of RagC/RRAGC or RagD/RRAGD, and thereby activating the kinase activity of mTORC1. The GTPase-activating activity is inhibited during starvation and activated in presence of nutrients. Acts as a key component for non-canonical mTORC1-dependent control of the MiT/TFE factors TFEB and TFE3, while it is not involved in mTORC1-dependent phosphorylation of canonical RPS6KB1/S6K1 and EIF4EBP1/4E-BP1. In low-amino acid conditions, the lysosomal folliculin complex (LFC) is formed on the membrane of lysosomes, which inhibits the GTPase-activating activity of FLCN, inactivates mTORC1 and maximizes nuclear translocation of TFEB and TFE3. Upon amino acid restimulation, RagA/RRAGA (or RagB/RRAGB) nucleotide exchange promotes disassembly of the LFC complex and liberates the GTPase-activating activity of FLCN, leading to activation of mTORC1 and subsequent cytoplasmic retention of TFEB and TFE3. Indirectly acts as a positive regulator of Wnt signaling by promoting mTOR-dependent cytoplasmic retention of MiT/TFE factor TFE3. Required for the exit of hematopoietic stem cell from pluripotency by promoting mTOR-dependent cytoplasmic retention of TFE3, thereby increasing Wnt signaling. Acts as an inhibitor of browning of adipose tissue by regulating mTOR-dependent cytoplasmic retention of TFE3. Involved in the control of embryonic stem cells differentiation; together with LAMTOR1 it is necessary to recruit and activate RagC/RRAGC and RagD/RRAGD at the lysosomes, and to induce exit of embryonic stem cells from pluripotency via non-canonical, mTOR-independent TFE3 inactivation. In response to flow stress, regulates STK11/LKB1 accumulation and mTORC1 activation through primary cilia: may act by recruiting STK11/LKB1 to primary cilia for activation of AMPK resided at basal bodies, causing mTORC1 down-regulation. Together with FNIP1 and/or FNIP2, regulates autophagy: following phosphorylation by ULK1, interacts with GABARAP and promotes autophagy. Required for starvation-induced perinuclear clustering of lysosomes by promoting association of RILP with its effector RAB34. Regulates glycolysis by binding to lactate dehydrogenase LDHA, acting as an uncompetitive inhibitor. The sequence is that of Folliculin from Homo sapiens (Human).